The following is a 67-amino-acid chain: Small ribosomal subunit protein bS21 (67 aa).

Belongs to the bacterial ribosomal protein bS21 family.

The polypeptide is Small ribosomal subunit protein bS21 (Nitratidesulfovibrio vulgaris (strain DP4) (Desulfovibrio vulgaris)).